The sequence spans 224 residues: Germin-like protein 8-10 (224 aa).

An N-terminal signal peptide occupies residues 1–22; the sequence is MASPSICLLAALLALVSWQAIA. A disulfide bond links Cys-32 and Cys-47. A Cupin type-1 domain is found at 62–212; that stretch reads AMLDTPRKTN…AFQVEKGTID (151 aa). The N-linked (GlcNAc...) asparagine glycan is linked to Asn-76. The Mn(2+) site is built by His-109, His-111, and Glu-116. N-linked (GlcNAc...) asparagine glycosylation occurs at Asn-135. His-157 contributes to the Mn(2+) binding site.

It belongs to the germin family. Oligomer (believed to be a pentamer but probably hexamer).

It is found in the secreted. The protein localises to the extracellular space. The protein resides in the apoplast. Plays a role in broad-spectrum disease resistance. Probably has no oxalate oxidase activity even if the active site is conserved. This chain is Germin-like protein 8-10 (GLP2), found in Oryza sativa subsp. japonica (Rice).